The chain runs to 68 residues: Purkinje cell protein 4-like protein 1 (68 aa).

A compositionally biased stretch (polar residues) spans 1–16 (MSELNTKTPPAANQAS). Positions 1–42 (MSELNTKTPPAANQASDPEEKGKPGSIKKAEEEEEIDIDLTA) are disordered. Threonine 8 is subject to Phosphothreonine. Residues 18–31 (PEEKGKPGSIKKAE) are compositionally biased toward basic and acidic residues. An IQ domain is found at 45-68 (TEKAALAIQGKFRRFQKRKKDSSS).

The protein belongs to the PCP4 family. As to expression, expressed in laminar and nuclear structures of the CNS.

This is Purkinje cell protein 4-like protein 1 (Pcp4l1) from Mus musculus (Mouse).